The chain runs to 86 residues: Large ribosomal subunit protein bL31B (86 aa).

Belongs to the bacterial ribosomal protein bL31 family. Type B subfamily. In terms of assembly, part of the 50S ribosomal subunit.

The chain is Large ribosomal subunit protein bL31B from Cupriavidus taiwanensis (strain DSM 17343 / BCRC 17206 / CCUG 44338 / CIP 107171 / LMG 19424 / R1) (Ralstonia taiwanensis (strain LMG 19424)).